The following is a 1585-amino-acid chain: MGKKRKPSPERSSDEDEVSTPSPKDRTARPTAAARRENVALSQAVALSLEDASNFCSLAFSLERIKREPVDTDYDDPNQPGPSSVPVSARTDHVLPIRFKIKAEPQEYDSDEYGKDHGAVQIANKEVPAISPIEEVSQKRRGRPRKTDAAQHLFFPHVSIKQEPDDGFINFHESRCVGIAQDPEMQHLHDVNESHSSEIAIFRETKKITERKKKKTEAEKLWDNMSLTEKEVFQSHTRRRRTTRLPIIQNFEETEEGCIVEVPIPLIDLDNDAVESVTGPQHENVTVSENVLSTESTDQEVTETKRLHDSSRDFNPPRIQDTPSTVIRPEGDQKDPMSSTSSKRRNTNNSRCASLLSNPHSTPVTRLMRGILDSENSDNDEMLSNDQSEIAKRPRTPRPRYSPEAQRRTNSRLSALTIDTNRSNDLNVDGSAPSSSSAASCGLSTPDPDRTSQQRRKGNQSAARSRKIKTPSPPLSQEDEPMELDSDDDPVNELDNLPIVIDDPSYVLTKEHKEIFEQVKKSVSDRNEFSPAQISEIYRSSKGEQARLPERIHFGAFIMKTWYGSPFPAEFINVKKLFICEFCFFYARSDEIMQNHAKKCMLRAPPGLEIYRKGDISVFEVDGRLQKEYCQTLCLVSRMFLESKTVFYDTEPFFFYIVTINDDIGCHFAGYFSKEKYEPDVNNLSCIMTLPCYQEMGLGRFLIDISYALSRKEKWFGGPEQPLSELGRKAYGGYWRTTIASCLGRLKDELEFGSGISIKMIADDTGVNCHDILEVVCSLGWAKPVDPDEKNHYKLEWDVDWDMVSIILRESEASKETKVQYDPECLDWVPRKMRPSMDGYHELSKEEIEQDEQRRKSIQKTPVHVSMEKATPTSTTSLPVGSVKKELRSRGHNRSVGRNLKHEVNRKVKVPEWAAARDLTDEEITVEENKKQQKQNRKIFTRCADSVLDKSNIREETPEDDEPGPSTKPSGKRQRGNKCNNTESEPNPSGRKTSATSSGRGKYRNRRTDGTEEEEEDDDPTDSEPLTTDDEKPFETSVNKEKNEKSRRGKKVSKKRRSVAGKKFPPNFGVRDRDEPKKAENSEDGEGLESKPGPSTEMILVEKVEEEEAKVTVSDINMQASESKIEGIEQTSEVDIPKSDEDHQSTEAYDRVEDEVPITDYNIPTPDSYHSSPPHSPTPSPQPQLMQAQQNIYQDNDCHFAENDSKPPHLVSEVDDPAAPQPTVTLQSGPSDAPPLSHNSVDGYSTGDDDAPPNLSPQIGKSENNEEEMPLIAPIVQHNGITHHEESTAQHYHDSMNAGPSTSSHVTPQMSMINTTPQQPPFSHPNSQQQATPGSGGVPSCGPAYTHHTPEQQSQQFMSPPMAGMPASVASNHSIHNSNSIEMVGGPASLQHTPQQYEMGHSMAQMSQESAIGGINTVPSIEQQNQLMLQHHQFSSPPAAPPPSQQQQVVQPPIPPAPTTANGRRRSESAATQRTKARQQHQHQQQQPQQPQQRIAAPGVPQGVHPQMQFPMNAMNMMPAYPPFYPYTNYPNIWQPPYQNYPYNQVDYQQPWLYNNGHIPHQTNGTATNQFHPGHMGYFPNNNGR.

2 disordered regions span residues 1–37 and 279–491; these read MGKK…ARRE and GPQH…DDPV. Over residues 23–37 the composition is skewed to basic and acidic residues; sequence PKDRTARPTAAARRE. The span at 279–296 shows a compositional bias: polar residues; sequence GPQHENVTVSENVLSTES. The span at 302–312 shows a compositional bias: basic and acidic residues; sequence TETKRLHDSSR. 2 stretches are compositionally biased toward polar residues: residues 355–364 and 411–426; these read LLSNPHSTPV and SRLS…SNDL. Over residues 431–440 the composition is skewed to low complexity; sequence SAPSSSSAAS. A compositionally biased stretch (basic residues) spans 453 to 469; sequence QQRRKGNQSAARSRKIK. Acidic residues predominate over residues 477-491; sequence QEDEPMELDSDDDPV. The MYST-type HAT domain maps to 544–830; sequence EQARLPERIH…YDPECLDWVP (287 aa). A C2HC MYST-type zinc finger spans residues 577–602; sequence LFICEFCFFYARSDEIMQNHAKKCML. K644 carries the N6-acetyllysine; by autocatalysis modification. 685–689 is an acetyl-CoA binding site; that stretch reads SCIMT. The active-site Proton donor/acceptor is E720. S724 and K815 together coordinate acetyl-CoA. Composition is skewed to basic and acidic residues over residues 844–855 and 947–956; these read SKEEIEQDEQRR and VLDKSNIREE. 4 disordered regions span residues 844-903, 927-1262, 1286-1373, and 1431-1507; these read SKEE…LKHE, EENK…IGKS, ESTA…ASNH, and HHQF…VHPQ. Residues 977–999 show a composition bias toward polar residues; that stretch reads NKCNNTESEPNPSGRKTSATSSG. Positions 1011–1022 are enriched in acidic residues; the sequence is TEEEEEDDDPTD. Basic and acidic residues predominate over residues 1029–1046; it reads DDEKPFETSVNKEKNEKS. The span at 1047 to 1060 shows a compositional bias: basic residues; sequence RRGKKVSKKRRSVA. Basic and acidic residues-rich tracts occupy residues 1070–1081 and 1135–1151; these read VRDRDEPKKAEN and DIPK…AYDR. Low complexity predominate over residues 1164–1173; it reads PTPDSYHSSP. Residues 1185 to 1194 show a composition bias toward polar residues; that stretch reads LMQAQQNIYQ. Over residues 1196–1207 the composition is skewed to basic and acidic residues; that stretch reads NDCHFAENDSKP. Polar residues-rich tracts occupy residues 1298–1317 and 1324–1333; these read AGPS…NTTP and HPNSQQQATP. Over residues 1482–1493 the composition is skewed to low complexity; that stretch reads QHQQQQPQQPQQ.

Belongs to the MYST (SAS/MOZ) family.

The catalysed reaction is L-lysyl-[protein] + acetyl-CoA = N(6)-acetyl-L-lysyl-[protein] + CoA + H(+). Functionally, probable histone acetyltransferase. Required to initiate and then maintain lateralized gene expression in the ASE sensory neurons. Involved in determining cell fate in the ASE neurons. The sequence is that of Histone acetyltransferase lsy-12 from Caenorhabditis elegans.